We begin with the raw amino-acid sequence, 113 residues long: Pancreatic progenitor cell differentiation and proliferation factor B (113 aa).

It belongs to the PPDPF family.

In terms of biological role, probable regulator of exocrine pancreas development. This is Pancreatic progenitor cell differentiation and proliferation factor B (ppdpf-b) from Xenopus laevis (African clawed frog).